The following is a 93-amino-acid chain: DNA-directed RNA polymerase subunit omega (93 aa).

It belongs to the RNA polymerase subunit omega family. As to quaternary structure, the RNAP catalytic core consists of 2 alpha, 1 beta, 1 beta' and 1 omega subunit. When a sigma factor is associated with the core the holoenzyme is formed, which can initiate transcription.

It catalyses the reaction RNA(n) + a ribonucleoside 5'-triphosphate = RNA(n+1) + diphosphate. Promotes RNA polymerase assembly. Latches the N- and C-terminal regions of the beta' subunit thereby facilitating its interaction with the beta and alpha subunits. This Shewanella loihica (strain ATCC BAA-1088 / PV-4) protein is DNA-directed RNA polymerase subunit omega.